A 320-amino-acid polypeptide reads, in one-letter code: Pyrroline-5-carboxylate reductase 1, mitochondrial (320 aa).

N-acetylserine is present on S2. Residues I6–L11 and S34 each bind NADP(+). Residues A8, Q10, L11, S34, D36, N56, V70, K71, and A97 each coordinate NADPH. NADP(+) is bound by residues N56, A69–P72, and C95–A97. E164 serves as a coordination point for L-proline. NADPH is bound at residue N230. L-proline contacts are provided by A237 and T238. S278 is subject to Phosphoserine. Residues L292–D320 are disordered.

The protein belongs to the pyrroline-5-carboxylate reductase family. In terms of assembly, homodecamer; composed of 5 homodimers. Interacts with LTO1.

It localises to the mitochondrion. It catalyses the reaction L-proline + NADP(+) = (S)-1-pyrroline-5-carboxylate + NADPH + 2 H(+). The catalysed reaction is L-proline + NAD(+) = (S)-1-pyrroline-5-carboxylate + NADH + 2 H(+). It participates in amino-acid biosynthesis; L-proline biosynthesis; L-proline from L-glutamate 5-semialdehyde: step 1/1. Functionally, oxidoreductase that catalyzes the last step in proline biosynthesis, which corresponds to the reduction of pyrroline-5-carboxylate to L-proline using NAD(P)H. At physiologic concentrations, has higher specific activity in the presence of NADH. Involved in the cellular response to oxidative stress. This chain is Pyrroline-5-carboxylate reductase 1, mitochondrial (PYCR1), found in Bos taurus (Bovine).